Reading from the N-terminus, the 155-residue chain is Transcription antitermination protein NusB (155 aa).

It belongs to the NusB family.

In terms of biological role, involved in transcription antitermination. Required for transcription of ribosomal RNA (rRNA) genes. Binds specifically to the boxA antiterminator sequence of the ribosomal RNA (rrn) operons. The sequence is that of Transcription antitermination protein NusB from Mesorhizobium japonicum (strain LMG 29417 / CECT 9101 / MAFF 303099) (Mesorhizobium loti (strain MAFF 303099)).